The sequence spans 502 residues: MENLSERFNVLQDQLMNIYETAAQTLEAQIEHWQILRREAVLLYFARQKGVTRLGYQPVPALMVSEAKAKEAIGMVLQLQSLQKSEFGKEPWSLVDTSTETYKSPPENHFKKGPMPIEVIYDKDADNANAYTMWRYIYYVDDDDKWHKSASGVNHTGIYFMHGSFRHYYVLFADDARRYSNTGHWEVKVNKDTVFTPVTSSTPPESPGGQADSNTSSKTPTTDTASRLSPTGSGERSQQTSTKGRRYERRPSSRTRRQQAQARQRRSRSKSRSRSRSQSRSRIRSRSRSRSRSESQSSKRRSRSRSRRKTSATRGRGPGSPTTTTSDRAARSPSTTSSATSQRSQRSRSRAGSSRGGRGRGGRRRHRLSESPTSKRSRRESGSVRLHGVSADAVGTSVHTVSSRHTGRLGRLLEEALDPPVILVRGDANTLRSFRNRAKHMYTGLFSSFSTAWSWVAGDGIERLGRSRMLISFISNSQRKHFDDAVRYPKGVDRSFGSFDSL.

The tract at residues M1 to S201 is transactivation domain. Positions F195–G388 are disordered. Polar residues predominate over residues A211 to T242. Composition is skewed to basic residues over residues K243–R290 and S298–S311. Positions A312–S344 are enriched in low complexity. The segment covering G357–R367 has biased composition (basic residues). The interval D418–L502 is DNA-binding domain.

The protein belongs to the papillomaviridae E2 protein family. Binds DNA as homodimer. Interacts with protein E1; this interaction greatly increases E1 DNA-binding activity. Interacts with protein L1; this interaction enhances E2-dependent replication and transcription activation. Interacts with protein L2; this interaction inhibits E2 transcriptional activity but not DNA replication function E2. Interacts with protein E7; this interaction inhibits E7 oncogenic activity. Interacts with host TAF1; this interaction modulates E2-dependent transcriptional regulation. Interacts with host BRD4; this interaction mediates E2 transcriptional activation function. Additionally, the interaction with host BRD4 on mitotic chromosomes mediates tethering of the viral genome. Interacts with host TOPBP1; this interaction is required for optimal viral DNA replication. In terms of processing, phosphorylated.

The protein resides in the host nucleus. Its function is as follows. Plays a role in the initiation of viral DNA replication. A dimer of E2 interacts with a dimer of E1 in order to improve specificity of E1 DNA binding activity. Once the complex recognizes and binds DNA at specific sites, the E2 dimer is removed from DNA. E2 also regulates viral transcription through binding to the E2RE response element (5'-ACCNNNNNNGGT-3') present in multiple copies in the regulatory regions of the viral genome. Activates or represses transcription depending on E2RE's position with regards to proximal promoter elements including the TATA-box. Repression occurs by sterically hindering the assembly of the transcription initiation complex. In Human papillomavirus 25, this protein is Regulatory protein E2.